A 100-amino-acid chain; its full sequence is Urease subunit gamma (100 aa).

It belongs to the urease gamma subunit family. In terms of assembly, heterotrimer of UreA (gamma), UreB (beta) and UreC (alpha) subunits. Three heterotrimers associate to form the active enzyme.

The protein resides in the cytoplasm. The enzyme catalyses urea + 2 H2O + H(+) = hydrogencarbonate + 2 NH4(+). Its pathway is nitrogen metabolism; urea degradation; CO(2) and NH(3) from urea (urease route): step 1/1. The polypeptide is Urease subunit gamma (Variovorax paradoxus (strain S110)).